A 140-amino-acid polypeptide reads, in one-letter code: Transcription antitermination protein NusB (140 aa).

Belongs to the NusB family.

Functionally, involved in transcription antitermination. Required for transcription of ribosomal RNA (rRNA) genes. Binds specifically to the boxA antiterminator sequence of the ribosomal RNA (rrn) operons. The chain is Transcription antitermination protein NusB from Streptococcus pneumoniae serotype 2 (strain D39 / NCTC 7466).